Consider the following 599-residue polypeptide: Dehydrogenase eriK (599 aa).

The N-terminal stretch at 1–20 is a signal peptide; that stretch reads MAFLKARLAALLSVAVSCSA. FAD-binding positions include 43 to 44 and 64 to 65; these read TA and EG. Residue N93 is glycosylated (N-linked (GlcNAc...) asparagine). 122-125 contacts FAD; it reads NGMY. N-linked (GlcNAc...) asparagine glycans are attached at residues N169, N191, N234, N260, N284, N319, N339, N353, N365, N370, N398, N456, and N518. Residues A569 and 580 to 581 each bind FAD; that span reads TQ.

It belongs to the GMC oxidoreductase family. As to quaternary structure, homodimer. FAD is required as a cofactor.

Dehydrogenase; part of the gene cluster that mediates the biosynthesis of erinacines, cyathane-xylosides that show unique biological activities, including leishmanicidal activity, stimulating activity for nerve growth-factor synthesis, and agonistic activity toward the kappa opioid receptor. The role of the dehydrogenase eriK within the pathway has still to be determined. The first step of the erinacines biosynthesis pathway is catalyzed by the geranylgeranyl diphosphate (GGPP) synthase eriE via conversion of farnesyl pyrophosphate and isopentyl pyrophosphate into geranylgeranyl pyrophosphate (GGPP). GGPP is then substrate of the diterpene cyclase eriG for the production of cyatha-3,12-diene. The cytochrome P450 monooxygenase eriI then hydroxylates cyatha-3,12-diene at C-14 of the seven-membered ring to produce erinacol, which is further hydroxylated at C-15 by the cytochrome P450 monooxygenase eriC to yield cyathadiol. The cytochrome P450 monooxygenase eriA then catalyzes C-11 hydroxylation in the presence of the short chain dehydrogenase/reductase (SDR) eriH, which leads to the production of cyathatriol. The acetyltransferase eriL converts cyathatriol into 11-O-acetyl-cyathatriol. The SDR eriH catalyzes further oxidation of 11-O-acetyl-cyathatriol into 1-O-acetylcyathin A3. Finally, the glycosyl transferase eriJ tranfers xylose from UDP-xylose onto C-14 of 11-O-acetyl-cyathatriol to form eracine Q. EriJ is also able to convert 11-O-acetyl-cyathatriol to eracine Q2 by using UDP-D-glucose as cosubstrate, but at a lower rate. The polypeptide is Dehydrogenase eriK (Hericium erinaceus (Lion's mane mushroom)).